Reading from the N-terminus, the 193-residue chain is D-alanyl-D-alanine dipeptidase (193 aa).

His-98 and Asp-105 together coordinate Zn(2+). The active-site Proton donor/acceptor is Glu-162. A Zn(2+)-binding site is contributed by His-165.

This sequence belongs to the peptidase M15D family. The cofactor is Zn(2+).

The protein resides in the cytoplasm. It carries out the reaction D-alanyl-D-alanine + H2O = 2 D-alanine. Catalyzes hydrolysis of the D-alanyl-D-alanine dipeptide. May have a role in cell-wall turnover. The protein is D-alanyl-D-alanine dipeptidase of Escherichia coli (strain K12).